The chain runs to 360 residues: Transcription factor MYB39 (360 aa).

HTH myb-type domains follow at residues 10–62 (DKGV…MNYL) and 63–117 (RPDI…RKKL). 2 DNA-binding regions (H-T-H motif) span residues 38–62 (WRSL…MNYL) and 90–113 (WSKI…NTHM). The tract at residues 299–324 (PSTGSVSVSPETTSLNHPSTAQHSSG) is disordered.

It is found in the nucleus. The polypeptide is Transcription factor MYB39 (MYB39) (Arabidopsis thaliana (Mouse-ear cress)).